The primary structure comprises 32 residues: Glutathione S-transferase 8.2 (32 aa).

Residue 21-22 (QS) participates in glutathione binding.

Belongs to the GST superfamily. Alpha family. As to quaternary structure, homodimer. In terms of processing, the N-terminus is blocked.

It is found in the cytoplasm. The enzyme catalyses RX + glutathione = an S-substituted glutathione + a halide anion + H(+). In terms of biological role, conjugation of reduced glutathione to a wide number of exogenous and endogenous hydrophobic electrophiles. The protein is Glutathione S-transferase 8.2 of Dicentrarchus labrax (European seabass).